Consider the following 45-residue polypeptide: Photosystem II reaction center protein K (45 aa).

The propeptide occupies 1 to 8 (MEAALLLA). A helical transmembrane segment spans residues 24–44 (LPLIPLFFLLLAFVWQAAVGF).

It belongs to the PsbK family. In terms of assembly, PSII is composed of 1 copy each of membrane proteins PsbA, PsbB, PsbC, PsbD, PsbE, PsbF, PsbH, PsbI, PsbJ, PsbK, PsbL, PsbM, PsbT, PsbX, PsbY, PsbZ, Psb30/Ycf12, peripheral proteins PsbO, CyanoQ (PsbQ), PsbU, PsbV and a large number of cofactors. It forms dimeric complexes.

It localises to the cellular thylakoid membrane. In terms of biological role, one of the components of the core complex of photosystem II (PSII). PSII is a light-driven water:plastoquinone oxidoreductase that uses light energy to abstract electrons from H(2)O, generating O(2) and a proton gradient subsequently used for ATP formation. It consists of a core antenna complex that captures photons, and an electron transfer chain that converts photonic excitation into a charge separation. This is Photosystem II reaction center protein K from Picosynechococcus sp. (strain ATCC 27264 / PCC 7002 / PR-6) (Agmenellum quadruplicatum).